The chain runs to 564 residues: Kelch repeat and BTB domain-containing protein 1 (564 aa).

The BTB domain occupies 21-88 (CDIDIVINDE…IYGIPLSLTN (68 aa)). The BACK domain occupies 123–219 (CIDFYIYADK…SLLSPQVIKS (97 aa)). 6 Kelch repeats span residues 252–297 (IELI…VLDN), 298–346 (IIYM…ADDE), 347–395 (YIYC…MLNG), 397–441 (IYVI…VHAG), 442–492 (KIYI…SVHN), and 494–539 (LYVG…CEPI).

As to quaternary structure, interacts (via BTB domain) with host CUL3.

The protein localises to the host cytoplasm. Functionally, probable substrate-specific adapter of CUL3-containing E3 ubiquitin-protein ligases which mediate the ubiquitination and subsequent proteasomal degradation of host target proteins. The sequence is that of Kelch repeat and BTB domain-containing protein 1 (KBTB1) from Camelus.